Consider the following 307-residue polypeptide: MLKGRNLLDPMDFSLEELEEVFKLADEIIEEPEKFLHVCDGKILATLFYEPSTRTRFSFEAAMLRLGGQVIGFSEPNSSSVAKGESVADTIRTVGCYADIAAMRHPKEGAPAIAAMYSDIPVINAGDGSHQHPTQTLTDLLTIRSLKGDLSNLTIGCCGDLKFGRTVHSLVKALSRYKNNKFVFMSPEELKIPDYIRKEILEKNNIEYKEVSKMEDAMAELDILYMTRVQRERFFNEDDYVRLKDSYILDGEKMKYAKKDMMVLHPLPRVNEIAYEIDQDPRGCYFKQAKYGMYVRMALIAKLLGVR.

Carbamoyl phosphate is bound by residues Arg54 and Thr55. Residue Lys83 participates in L-aspartate binding. Arg104, His132, and Gln135 together coordinate carbamoyl phosphate. The L-aspartate site is built by Arg165 and Arg228. The carbamoyl phosphate site is built by Leu267 and Pro268.

This sequence belongs to the aspartate/ornithine carbamoyltransferase superfamily. ATCase family. As to quaternary structure, heterododecamer (2C3:3R2) of six catalytic PyrB chains organized as two trimers (C3), and six regulatory PyrI chains organized as three dimers (R2).

It carries out the reaction carbamoyl phosphate + L-aspartate = N-carbamoyl-L-aspartate + phosphate + H(+). It participates in pyrimidine metabolism; UMP biosynthesis via de novo pathway; (S)-dihydroorotate from bicarbonate: step 2/3. Functionally, catalyzes the condensation of carbamoyl phosphate and aspartate to form carbamoyl aspartate and inorganic phosphate, the committed step in the de novo pyrimidine nucleotide biosynthesis pathway. This chain is Aspartate carbamoyltransferase catalytic subunit, found in Clostridium botulinum (strain Langeland / NCTC 10281 / Type F).